Here is a 189-residue protein sequence, read N- to C-terminus: MPKPTKGPRLGGSSSHQKALLANLATSLFEHGRIKTTEPKARALRPYAEKLITHAKKGALHNRREVLKKIRDKDVVHTLFAEIGPFFADREGGYTRIIKVEPRKGDNAPMAVIELVREKTVTSEADRARRVKASQAASQDAPSEPQAAEEPAAEEAVAATEAVAAPADAEATDAEAGSADADADEAPQN.

The interval 126 to 189 is disordered; that stretch reads DRARRVKASQ…DADADEAPQN (64 aa). Residues 139–180 are compositionally biased toward low complexity; that stretch reads QDAPSEPQAAEEPAAEEAVAATEAVAAPADAEATDAEAGSAD.

Belongs to the bacterial ribosomal protein bL17 family. Part of the 50S ribosomal subunit. Contacts protein L32.

The chain is Large ribosomal subunit protein bL17 from Mycobacterium marinum (strain ATCC BAA-535 / M).